The primary structure comprises 1255 residues: Cilia- and flagella-associated protein 337 B (1255 aa).

An EF-hand domain is found at 87–122 (KLVRCLTNLFEEIDLNGNGILEWDEFTNYVIEKATV). Positions 100, 102, 104, and 111 each coordinate Ca(2+). WD repeat units follow at residues 228 to 269 (DLKT…WVLA), 282 to 322 (EFKN…KELE), 326 to 365 (AHTEVIMDMITMPKLQFLASGALDGLLILWDTINNKKKRV), 368 to 407 (EHTRGITSLSFNEALILLFSAGFDHEVCVWNPYIDNLIYK), 410 to 449 (GHSSPLLGVKVIEGTSQVITLDSDGNVRVTDIKKFSNVQC), 496 to 536 (VDDY…KIFS), 538 to 577 (VTQGEITCFTLDSLKKRMLIGDSMGQIGIYNTYNGAMIKA), 580 to 624 (KHSA…RTLE), 625 to 664 (LKDVMITSLGFDPITKMIIVATNTGITSFYESDTGKQNGS), 669 to 708 (TQYEEITSLNLIKNLPYIITTTTNGKINFIALPPLLFKFQ), 769 to 808 (QQNLSISNCIYCDQTKCLFLSDDKGFIKCFDISQILTILE), and 844 to 883 (AHYEMIKSLEYIQEENLLITTAYDKKVKLWDSKTGNLIDQ). 2 disordered regions span residues 941 to 988 (IKSL…NFNP) and 1140 to 1160 (QQQVQNQQTEPSSNRSHQQPG). Over residues 953–969 (TQESSTQEQEAAQQPQQ) the composition is skewed to low complexity. A compositionally biased stretch (polar residues) spans 1148 to 1160 (TEPSSNRSHQQPG).

It belongs to the CFAP337 family. As to quaternary structure, associates with components of the nexin-dynein regulatory complex (N-DRC) and the CFAP184:CFAP263 complex.

The protein resides in the cell projection. The protein localises to the cilium. Associates with components of the nexin-dynein regulatory complex (N-DRC), a key regulator of ciliary/flagellar motility, and might act as an inner dynein arm (IDA) hub or linkage. This chain is Cilia- and flagella-associated protein 337 B, found in Tetrahymena thermophila (strain SB210).